The chain runs to 24 residues: Ascaphin-5 (24 aa).

Expressed by the skin glands.

It localises to the secreted. In terms of biological role, antimicrobial peptide. Synthetic peptide shows higher potency against Gram-negative bacteria than against Gram-positive bacteria. Has a very week hemolytic activity. In Ascaphus truei (Coastal tailed frog), this protein is Ascaphin-5.